Here is a 520-residue protein sequence, read N- to C-terminus: Glutamate--cysteine ligase (520 aa).

The protein belongs to the glutamate--cysteine ligase type 1 family. Type 1 subfamily.

It carries out the reaction L-cysteine + L-glutamate + ATP = gamma-L-glutamyl-L-cysteine + ADP + phosphate + H(+). The protein operates within sulfur metabolism; glutathione biosynthesis; glutathione from L-cysteine and L-glutamate: step 1/2. The sequence is that of Glutamate--cysteine ligase from Leptospira interrogans serogroup Icterohaemorrhagiae serovar Lai (strain 56601).